The chain runs to 404 residues: Argininosuccinate synthase (404 aa).

Position 7–15 (7–15 (AYSGGLDTS)) interacts with ATP. 2 residues coordinate L-citrulline: Tyr-85 and Ser-90. Gly-115 contributes to the ATP binding site. Residues Thr-117, Asn-121, and Asp-122 each contribute to the L-aspartate site. Position 121 (Asn-121) interacts with L-citrulline. The L-citrulline site is built by Arg-125, Ser-178, Ser-187, Glu-264, and Tyr-276.

It belongs to the argininosuccinate synthase family. Type 1 subfamily. In terms of assembly, homotetramer.

Its subcellular location is the cytoplasm. It catalyses the reaction L-citrulline + L-aspartate + ATP = 2-(N(omega)-L-arginino)succinate + AMP + diphosphate + H(+). It participates in amino-acid biosynthesis; L-arginine biosynthesis; L-arginine from L-ornithine and carbamoyl phosphate: step 2/3. The protein is Argininosuccinate synthase of Rhodopirellula baltica (strain DSM 10527 / NCIMB 13988 / SH1).